Consider the following 2195-residue polypeptide: Integrator complex subunit 1 (2195 aa).

The tract at residues 1 to 86 is disordered; it reads MNRAKPTTVR…RPKLSSTPPL (86 aa). Phosphoserine is present on Ser-13. Residues 34-45 show a composition bias toward polar residues; the sequence is GQASESKTTSTL. Lys-47 carries the N6-acetyllysine modification. Low complexity predominate over residues 62–75; the sequence is SASLSGTSALTGLT. Thr-83 carries the phosphothreonine modification. Ser-87 carries the phosphoserine modification. A disordered region spans residues 267–297; it reads LLQGEGARSGGELGAGSSPHPSLTEEEDSQT. Residues Ser-307 and Ser-926 each carry the phosphoserine modification. A disordered region spans residues 923 to 947; sequence STASGEEDDEGESREQKAKKRQRQQ. The helical transmembrane segment at 1165-1185 threads the bilayer; the sequence is HILVVHAMVILLTLGPPRSGD. The interval 1313–1347 is disordered; that stretch reads SLPPRRDSTEAPKPESSPEPPPGQGRTRAGTQVPV. A compositionally biased stretch (basic and acidic residues) spans 1316 to 1325; that stretch reads PRRDSTEAPK. A phosphoserine mark is found at Ser-1320, Ser-1328, and Ser-1329.

This sequence belongs to the Integrator subunit 1 family. In terms of assembly, component of the Integrator complex, composed of core subunits INTS1, INTS2, INTS3, INTS4, INTS5, INTS6, INTS7, INTS8, INTS9/RC74, INTS10, INTS11/CPSF3L, INTS12, INTS13, INTS14 and INTS15. The core complex associates with protein phosphatase 2A subunits PPP2CA and PPP2R1A, to form the Integrator-PP2A (INTAC) complex. Interacts with ESRRB, ESRRB is not a core component of the Integrator complex and this association is a bridge for the interaction with the multiprotein complex Integrator; attracts the transcriptional machinery.

It localises to the nucleus. The protein resides in the nucleus membrane. Component of the integrator complex, a multiprotein complex that terminates RNA polymerase II (Pol II) transcription in the promoter-proximal region of genes. The integrator complex provides a quality checkpoint during transcription elongation by driving premature transcription termination of transcripts that are unfavorably configured for transcriptional elongation: the complex terminates transcription by (1) catalyzing dephosphorylation of the C-terminal domain (CTD) of Pol II subunit POLR2A/RPB1 and SUPT5H/SPT5, (2) degrading the exiting nascent RNA transcript via endonuclease activity and (3) promoting the release of Pol II from bound DNA. The integrator complex is also involved in terminating the synthesis of non-coding Pol II transcripts, such as enhancer RNAs (eRNAs), small nuclear RNAs (snRNAs), telomerase RNAs and long non-coding RNAs (lncRNAs). Within the integrator complex, INTS1 is involved in the post-termination step: INTS1 displaces INTS3 and the SOSS factors, allowing the integrator complex to return to the closed conformation, ready to bind to the paused elongation complex for another termination cycle. Mediates recruitment of cytoplasmic dynein to the nuclear envelope, probably as component of the integrator complex. In Mus musculus (Mouse), this protein is Integrator complex subunit 1.